We begin with the raw amino-acid sequence, 456 residues long: UDP-N-acetylglucosamine 1-carboxyvinyltransferase (456 aa).

Residue Lys34–Asn35 coordinates phosphoenolpyruvate. Arg104 contributes to the UDP-N-acetyl-alpha-D-glucosamine binding site. The active-site Proton donor is Cys128. Cys128 is subject to 2-(S-cysteinyl)pyruvic acid O-phosphothioketal. Residues Asp319 and Ile341 each coordinate UDP-N-acetyl-alpha-D-glucosamine.

This sequence belongs to the EPSP synthase family. MurA subfamily.

Its subcellular location is the cytoplasm. It catalyses the reaction phosphoenolpyruvate + UDP-N-acetyl-alpha-D-glucosamine = UDP-N-acetyl-3-O-(1-carboxyvinyl)-alpha-D-glucosamine + phosphate. It functions in the pathway cell wall biogenesis; peptidoglycan biosynthesis. Functionally, cell wall formation. Adds enolpyruvyl to UDP-N-acetylglucosamine. The protein is UDP-N-acetylglucosamine 1-carboxyvinyltransferase of Prochlorococcus marinus (strain MIT 9301).